Reading from the N-terminus, the 56-residue chain is Large ribosomal subunit protein eL40 (56 aa).

It belongs to the eukaryotic ribosomal protein eL40 family.

The protein is Large ribosomal subunit protein eL40 of Saccharolobus islandicus (strain Y.N.15.51 / Yellowstone #2) (Sulfolobus islandicus).